The chain runs to 250 residues: Prolactin-7A2 (250 aa).

An N-terminal signal peptide occupies residues 1–29 (MQLSFSRPRPWTLLLMVVSNLLLWENVSS). Asn26, Asn35, Asn102, and Asn134 each carry an N-linked (GlcNAc...) asparagine glycan. 2 disulfide bridges follow: Cys100–Cys215 and Cys232–Cys241.

This sequence belongs to the somatotropin/prolactin family. As to expression, expression restricted to placental tissues. Trophoblast giant cells are found to be the major source.

Its subcellular location is the secreted. The sequence is that of Prolactin-7A2 (Prl7a2) from Rattus norvegicus (Rat).